The following is a 545-amino-acid chain: MTTNYIFVTGGVVSSLGKGIAAASLAAILEARGLNVTIMKLDPYINVDPGTMSPIQHGEVFVTEDGAETDLDLGHYERFIRTKMTRRNNFTTGRIYSDVLRKERRGDYLGATVQVIPHITNAIKERVLAGGEGHDVVLVEIGGTVGDIESLPFLEAIRQMAVEIGREHTLFMHLTLVPYMAAAGEVKTKPTQHSVKELLSIGIQPDILICRSDRAVPANERAKIALFCNVPEKAVISLKDVDSIYKIPGLLKSQGLDDYICKRFSLTCPEANLAEWEQVIYEEANPAGEVTIGMVGKYIELPDAYKSVIEALKHGGLKNRVTVNIKLIDSQDVETRGVEILKDLDAILIPGGFGYRGVEGKIATARYARENNIPYLGICLGMQVALIEFARNVAGMENANSTEFVPDCKYPVVALITEWRDEDGNVEVRSEKSDLGGTMRLGAQQCQLDDESLVRQLYGEPTITERHRHRYEVNNMLLKPIEAAGLRVAGRSGDDQLVEIIEVPNHPWFVACQFHPEFTSTPRDGHPLFAGFVKAASEYQKRQAK.

An amidoligase domain region spans residues 1–266 (MTTNYIFVTG…DDYICKRFSL (266 aa)). Ser14 is a binding site for CTP. Ser14 serves as a coordination point for UTP. ATP is bound by residues 15–20 (SLGKGI) and Asp72. Residues Asp72 and Glu140 each coordinate Mg(2+). CTP is bound by residues 147–149 (DIE), 187–192 (KTKPTQ), and Lys223. Residues 187-192 (KTKPTQ) and Lys223 each bind UTP. 239–241 (KDV) contributes to the ATP binding site. Positions 291 to 542 (TIGMVGKYIE…VKAASEYQKR (252 aa)) constitute a Glutamine amidotransferase type-1 domain. Residue Gly352 participates in L-glutamine binding. The active-site Nucleophile; for glutamine hydrolysis is the Cys379. Residues 380–383 (LGMQ), Glu403, and Arg470 contribute to the L-glutamine site. Residues His515 and Glu517 contribute to the active site.

The protein belongs to the CTP synthase family. In terms of assembly, homotetramer.

It catalyses the reaction UTP + L-glutamine + ATP + H2O = CTP + L-glutamate + ADP + phosphate + 2 H(+). The catalysed reaction is L-glutamine + H2O = L-glutamate + NH4(+). It carries out the reaction UTP + NH4(+) + ATP = CTP + ADP + phosphate + 2 H(+). It functions in the pathway pyrimidine metabolism; CTP biosynthesis via de novo pathway; CTP from UDP: step 2/2. Allosterically activated by GTP, when glutamine is the substrate; GTP has no effect on the reaction when ammonia is the substrate. The allosteric effector GTP functions by stabilizing the protein conformation that binds the tetrahedral intermediate(s) formed during glutamine hydrolysis. Inhibited by the product CTP, via allosteric rather than competitive inhibition. Its function is as follows. Catalyzes the ATP-dependent amination of UTP to CTP with either L-glutamine or ammonia as the source of nitrogen. Regulates intracellular CTP levels through interactions with the four ribonucleotide triphosphates. The chain is CTP synthase from Klebsiella pneumoniae (strain 342).